Consider the following 516-residue polypeptide: D-aminopeptidase (516 aa).

Serine 61 serves as the catalytic Nucleophile. Lysine 64 (proton donor/acceptor) is an active-site residue. Residues 476–486 (RRSMDAPAPGD) form an important for specificity region. Residue aspartate 480 participates in substrate binding.

This sequence belongs to the peptidase S12 family. Homodimer.

The catalysed reaction is Release of an N-terminal D-amino acid from a peptide, Xaa-|-Yaa-, in which Xaa is preferably D-Ala, D-Ser or D-Thr. D-amino acid amides and methyl esters also are hydrolyzed, as is glycine amide.. With respect to regulation, inhibited by beta-lactam compounds such as 6-aminopenicillic acid, 7-aminocephalosporanic acid, benzylpenicillin and ampicillin. Inhibited by p-chloromercuribenzoate. Functionally, hydrolyzes N-terminal residues in D-amino acid-containing peptides. The sequence is that of D-aminopeptidase from Cereibacter sphaeroides (strain ATCC 17023 / DSM 158 / JCM 6121 / CCUG 31486 / LMG 2827 / NBRC 12203 / NCIMB 8253 / ATH 2.4.1.) (Rhodobacter sphaeroides).